A 246-amino-acid chain; its full sequence is Triosephosphate isomerase (246 aa).

9–11 is a substrate binding site; sequence NWK. H91 functions as the Electrophile in the catalytic mechanism. E161 acts as the Proton acceptor in catalysis. Residues G167, S206, and 227–228 contribute to the substrate site; that span reads GG.

The protein belongs to the triosephosphate isomerase family. As to quaternary structure, homodimer.

It is found in the cytoplasm. The catalysed reaction is D-glyceraldehyde 3-phosphate = dihydroxyacetone phosphate. Its pathway is carbohydrate biosynthesis; gluconeogenesis. The protein operates within carbohydrate degradation; glycolysis; D-glyceraldehyde 3-phosphate from glycerone phosphate: step 1/1. Its function is as follows. Involved in the gluconeogenesis. Catalyzes stereospecifically the conversion of dihydroxyacetone phosphate (DHAP) to D-glyceraldehyde-3-phosphate (G3P). The polypeptide is Triosephosphate isomerase (Ruegeria sp. (strain TM1040) (Silicibacter sp.)).